The chain runs to 218 residues: Small ribosomal subunit protein uS3 (218 aa).

The region spanning 38 to 106 (IRKFIATKLA…RVHINIVEIK (69 aa)) is the KH type-2 domain.

It belongs to the universal ribosomal protein uS3 family. As to quaternary structure, part of the 30S ribosomal subunit. Forms a tight complex with proteins S10 and S14.

Its function is as follows. Binds the lower part of the 30S subunit head. Binds mRNA in the 70S ribosome, positioning it for translation. This is Small ribosomal subunit protein uS3 from Enterococcus faecalis (strain ATCC 700802 / V583).